We begin with the raw amino-acid sequence, 292 residues long: Calponin-1 (292 aa).

The Calponin-homology (CH) domain occupies 28-131; the sequence is PQTERQLRVW…STLIALASQA (104 aa). Calponin-like repeat units lie at residues 164 to 189, 204 to 229, and 243 to 268; these read IGLQMGTNKFASQQGMTAYGTRRHLY, ISLQMGTNKGASQAGMTAPGTKRQIF, and IGLQMGSNKGASQQGMTVYGLPRQVY. A Phosphothreonine; by ROCK2 modification is found at Thr170. The residue at position 175 (Ser175) is a Phosphoserine; by PKC, CaMK2 and ROCK2. 2 positions are modified to phosphothreonine; by ROCK2: Thr180 and Thr184. The residue at position 184 (Thr184) is a Phosphothreonine; by PKC and CaMK2. The tract at residues 185–193 is calmodulin-binding; sequence RRHLYDPKL. Phosphothreonine; by ROCK2 is present on Thr259.

Belongs to the calponin family. In terms of processing, phosphorylation by PKC or CaM kinase II reduces the binding of calponin to F-actin and tropomyosin. As to expression, smooth muscle, and tissues containing significant amounts of smooth muscle.

In terms of biological role, thin filament-associated protein that is implicated in the regulation and modulation of smooth muscle contraction. It is capable of binding to actin, calmodulin and tropomyosin. The interaction of calponin with actin inhibits the actomyosin Mg-ATPase activity. In Gallus gallus (Chicken), this protein is Calponin-1 (CNN1).